We begin with the raw amino-acid sequence, 1837 residues long: Zinc finger SWIM domain-containing protein 8 (1837 aa).

A phosphoserine mark is found at S36, S48, and S53. Positions 45–65 (RKQSAGPNSPTGGGGGGGSGG) are disordered. Residues 55-65 (TGGGGGGGSGG) are compositionally biased toward gly residues. Residues 172–208 (YNVAVMFDRCRVTSCSCTCGAGAKWCTHVVALCLFRI) form an SWIM-type zinc finger. The residue at position 437 (S437) is a Phosphoserine. Disordered regions lie at residues 514 to 727 (SRPG…EEDD), 803 to 823 (NPPD…KVST), and 1016 to 1232 (SQTH…VPNQ). 2 stretches are compositionally biased toward basic and acidic residues: residues 523–532 (GLEESRDRPR) and 566–575 (LSAEGGDKAL). At S567 the chain carries Phosphoserine. Gly residues predominate over residues 579–602 (GPGGGKAKALGGAGSGSKGSAGGG). Over residues 1019–1040 (HKPQTLSSFYSSSRPTTASQRS) the composition is skewed to polar residues. Over residues 1119 to 1130 (SRGGYNGRGWGS) the composition is skewed to gly residues. T1139 is modified (phosphothreonine). The span at 1144–1159 (IDSSAPETTSDSSPTL) shows a compositional bias: polar residues. Phosphoserine is present on residues S1153, S1156, and S1160. A compositionally biased stretch (low complexity) spans 1174 to 1209 (GRGQDSDSISSSSSDSLGSSSSSGSRRASASGGARA). Over residues 1210 to 1226 (KTVEVGRYKGRRPESHA) the composition is skewed to basic and acidic residues. The residue at position 1267 (S1267) is a Phosphoserine. 2 disordered regions span residues 1442–1464 (SASG…GGPG) and 1635–1656 (QPSP…SQPV). The span at 1447-1464 (RAGGEAGRGMPEGRGGPG) shows a compositional bias: gly residues. S1836 carries the post-translational modification Phosphoserine.

It belongs to the ZSWIM8 family. Component of the SCF-like E3 ubiquitin-protein ligase complex which contains CUL3, RBX1, ELOB, ELOC and ZSWIM8. In terms of assembly, (Microbial infection) Interacts with Zika virus protein NS5; this interaction allows STAT2 binding and subsequent proteasomal degradation.

It is found in the cytoplasm. Its subcellular location is the cytosol. The protein operates within protein modification; protein ubiquitination. In terms of biological role, substrate recognition component of a SCF-like E3 ubiquitin-protein ligase complex that promotes target-directed microRNA degradation (TDMD), a process that mediates degradation of microRNAs (miRNAs). The SCF-like E3 ubiquitin-protein ligase complex acts by catalyzing ubiquitination and subsequent degradation of AGO proteins (AGO1, AGO2, AGO3 and/or AGO4), thereby exposing miRNAs for degradation. Specifically recognizes and binds AGO proteins when they are engaged with a TDMD target. May also act as a regulator of axon guidance: specifically recognizes misfolded ROBO3 and promotes its ubiquitination and subsequent degradation. Plays an essential role for proper embryonic development of heart and lung. Controls protein quality of DAB1, a key signal molecule for brain development, thus protecting its signaling strength. Mechanistically, recognizes intrinsically disordered regions of DAB1 and eliminates misfolded DAB1 that cannot be properly phosphorylated. (Microbial infection) Participates in Zika virus inhibition of IFN signaling by acting as a scaffold protein to connect ZSWIM8/CUL3 ligase complex and STAT2, leading to STAT2 degradation. This chain is Zinc finger SWIM domain-containing protein 8, found in Homo sapiens (Human).